The chain runs to 211 residues: Thymidylate kinase (211 aa).

11–18 provides a ligand contact to ATP; sequence GPDGAGKT.

The protein belongs to the thymidylate kinase family.

The catalysed reaction is dTMP + ATP = dTDP + ADP. Its function is as follows. Phosphorylation of dTMP to form dTDP in both de novo and salvage pathways of dTTP synthesis. This is Thymidylate kinase from Streptococcus pyogenes serotype M3 (strain ATCC BAA-595 / MGAS315).